The chain runs to 404 residues: Cysteine desulfurase IscS (404 aa).

Pyridoxal 5'-phosphate contacts are provided by residues alanine 75–threonine 76, asparagine 155, glutamine 183, and serine 203–histidine 205. Lysine 206 carries the N6-(pyridoxal phosphate)lysine modification. Residue threonine 243 coordinates pyridoxal 5'-phosphate. Catalysis depends on cysteine 328, which acts as the Cysteine persulfide intermediate. Residue cysteine 328 coordinates [2Fe-2S] cluster.

It belongs to the class-V pyridoxal-phosphate-dependent aminotransferase family. NifS/IscS subfamily. In terms of assembly, homodimer. Forms a heterotetramer with IscU, interacts with other sulfur acceptors. It depends on pyridoxal 5'-phosphate as a cofactor.

The protein resides in the cytoplasm. The enzyme catalyses (sulfur carrier)-H + L-cysteine = (sulfur carrier)-SH + L-alanine. The protein operates within cofactor biosynthesis; iron-sulfur cluster biosynthesis. Its function is as follows. Master enzyme that delivers sulfur to a number of partners involved in Fe-S cluster assembly, tRNA modification or cofactor biosynthesis. Catalyzes the removal of elemental sulfur atoms from cysteine to produce alanine. Functions as a sulfur delivery protein for Fe-S cluster synthesis onto IscU, an Fe-S scaffold assembly protein, as well as other S acceptor proteins. This is Cysteine desulfurase IscS from Pseudomonas putida (strain GB-1).